The following is a 474-amino-acid chain: Cyclin-dependent kinase 18 (474 aa).

Residues serine 14, serine 74, serine 89, serine 98, serine 117, and serine 132 each carry the phosphoserine modification. A disordered region spans residues aspartate 44 to arginine 87. In terms of domain architecture, Protein kinase spans tyrosine 144 to phenylalanine 425. Residues leucine 150 to valine 158 and lysine 173 each bind ATP. Catalysis depends on aspartate 265, which acts as the Proton acceptor. Phosphoserine occurs at positions 440 and 443.

The protein belongs to the protein kinase superfamily. CMGC Ser/Thr protein kinase family. CDC2/CDKX subfamily.

It carries out the reaction L-seryl-[protein] + ATP = O-phospho-L-seryl-[protein] + ADP + H(+). The enzyme catalyses L-threonyl-[protein] + ATP = O-phospho-L-threonyl-[protein] + ADP + H(+). In terms of biological role, may play a role in signal transduction cascades in terminally differentiated cells. The protein is Cyclin-dependent kinase 18 (CDK18) of Pongo abelii (Sumatran orangutan).